Consider the following 100-residue polypeptide: Small ribosomal subunit protein uS14c (100 aa).

The protein belongs to the universal ribosomal protein uS14 family. Part of the 30S ribosomal subunit.

The protein localises to the plastid. Its subcellular location is the chloroplast. In terms of biological role, binds 16S rRNA, required for the assembly of 30S particles. This is Small ribosomal subunit protein uS14c from Gossypium barbadense (Sea Island cotton).